Here is a 317-residue protein sequence, read N- to C-terminus: UV DNA damage endonuclease (317 aa).

This sequence belongs to the uve1/UvsE family.

Component in a DNA repair pathway. Removal of UV LIGHT damaged nucleotides. Recognizes pyrimidine dimers and cleave a phosphodiester bond immediately 5' to the lesion. The protein is UV DNA damage endonuclease of Bacillus cereus (strain Q1).